Reading from the N-terminus, the 230-residue chain is Ubiquitin carboxyl-terminal hydrolase isozyme L3 (230 aa).

The 225-residue stretch at arginine 5 to alanine 229 folds into the UCH catalytic domain. Positions proline 8–proline 13 are interaction with ubiquitin. The Nucleophile role is filled by cysteine 95. A Phosphoserine modification is found at serine 130. An interaction with ubiquitin. Crossover loop which restricts access of large ubiquitin adducts to the active site region spans residues alanine 152–alanine 159. Histidine 169 functions as the Proton donor in the catalytic mechanism. The tract at residues glutamate 219–alanine 224 is interaction with ubiquitin.

The protein belongs to the peptidase C12 family. In terms of assembly, preferentially binds diubiquitin; the interaction does not hydrolyze diubiquitin but, in vitro, inhibits the hydrolyzing activity on other substrates. Highly expressed in heart, skeletal muscle, and testis.

The protein resides in the cytoplasm. The enzyme catalyses Thiol-dependent hydrolysis of ester, thioester, amide, peptide and isopeptide bonds formed by the C-terminal Gly of ubiquitin (a 76-residue protein attached to proteins as an intracellular targeting signal).. With respect to regulation, inhibited by monoubiquitin and diubiquitin. Its function is as follows. Deubiquitinating enzyme (DUB) that controls levels of cellular ubiquitin through processing of ubiquitin precursors and ubiquitinated proteins. Thiol protease that recognizes and hydrolyzes a peptide bond at the C-terminal glycine of either ubiquitin or NEDD8. Has a 10-fold preference for Arg and Lys at position P3'', and exhibits a preference towards 'Lys-48'-linked ubiquitin chains. Deubiquitinates ENAC in apical compartments, thereby regulating apical membrane recycling. Indirectly increases the phosphorylation of IGFIR, AKT and FOXO1 and promotes insulin-signaling and insulin-induced adipogenesis. Required for stress-response retinal, skeletal muscle and germ cell maintenance. May be involved in working memory. Can hydrolyze UBB(+1), a mutated form of ubiquitin which is not effectively degraded by the proteasome and is associated with neurogenerative disorders. This is Ubiquitin carboxyl-terminal hydrolase isozyme L3 (UCHL3) from Homo sapiens (Human).